The chain runs to 1496 residues: DNA-directed RNA polymerase subunit beta' (1496 aa).

Zn(2+)-binding residues include Cys-70, Cys-72, Cys-85, and Cys-88. Positions 461, 463, and 465 each coordinate Mg(2+). Residues Cys-908, Cys-982, Cys-989, and Cys-992 each contribute to the Zn(2+) site. Residues 1467–1496 (DKDMQVEGESEVPAIPPVAEGSAPEAPPAE) are disordered.

Belongs to the RNA polymerase beta' chain family. As to quaternary structure, the RNAP catalytic core consists of 2 alpha, 1 beta, 1 beta' and 1 omega subunit. When a sigma factor is associated with the core the holoenzyme is formed, which can initiate transcription. Requires Mg(2+) as cofactor. Zn(2+) serves as cofactor.

The catalysed reaction is RNA(n) + a ribonucleoside 5'-triphosphate = RNA(n+1) + diphosphate. DNA-dependent RNA polymerase catalyzes the transcription of DNA into RNA using the four ribonucleoside triphosphates as substrates. The protein is DNA-directed RNA polymerase subunit beta' of Paramagnetospirillum magneticum (strain ATCC 700264 / AMB-1) (Magnetospirillum magneticum).